We begin with the raw amino-acid sequence, 515 residues long: 2-isopropylmalate synthase (515 aa).

The 264-residue stretch at 5-268 (VIIFDTTLRD…VCGIDATQIV (264 aa)) folds into the Pyruvate carboxyltransferase domain. Residues D14, H202, H204, and N239 each contribute to the Mn(2+) site. The segment at 394–515 (KFISLSQHSE…QAKLNAQMTP (122 aa)) is regulatory domain.

This sequence belongs to the alpha-IPM synthase/homocitrate synthase family. LeuA type 1 subfamily. In terms of assembly, homodimer. The cofactor is Mn(2+).

Its subcellular location is the cytoplasm. The enzyme catalyses 3-methyl-2-oxobutanoate + acetyl-CoA + H2O = (2S)-2-isopropylmalate + CoA + H(+). Its pathway is amino-acid biosynthesis; L-leucine biosynthesis; L-leucine from 3-methyl-2-oxobutanoate: step 1/4. Functionally, catalyzes the condensation of the acetyl group of acetyl-CoA with 3-methyl-2-oxobutanoate (2-ketoisovalerate) to form 3-carboxy-3-hydroxy-4-methylpentanoate (2-isopropylmalate). The sequence is that of 2-isopropylmalate synthase from Polynucleobacter necessarius subsp. necessarius (strain STIR1).